The chain runs to 118 residues: Small ribosomal subunit protein uS13 (118 aa).

Residues 94 to 118 (SLPLRGQRTKTNARTRKGPRKPIKK) are disordered.

The protein belongs to the universal ribosomal protein uS13 family. Part of the 30S ribosomal subunit. Forms a loose heterodimer with protein S19. Forms two bridges to the 50S subunit in the 70S ribosome.

In terms of biological role, located at the top of the head of the 30S subunit, it contacts several helices of the 16S rRNA. In the 70S ribosome it contacts the 23S rRNA (bridge B1a) and protein L5 of the 50S subunit (bridge B1b), connecting the 2 subunits; these bridges are implicated in subunit movement. Contacts the tRNAs in the A and P-sites. This chain is Small ribosomal subunit protein uS13, found in Vibrio parahaemolyticus serotype O3:K6 (strain RIMD 2210633).